A 295-amino-acid polypeptide reads, in one-letter code: Fatty acyl-CoA reductase (295 aa).

An NADP(+)-binding site is contributed by 21–28; sequence TGASSGIG. Ser153 contacts substrate. The active-site Proton acceptor is the Tyr166.

It belongs to the short-chain dehydrogenases/reductases (SDR) family.

It catalyses the reaction hexadecanal + NADP(+) + CoA = hexadecanoyl-CoA + NADPH + H(+). Its function is as follows. Catalyzes the NADPH-dependent reduction of long chain acyl-CoA (with chain lengths of 14 to 22 carbons) to the corresponding aldehyde. This Acinetobacter baylyi (strain ATCC 33305 / BD413 / ADP1) protein is Fatty acyl-CoA reductase (acr1).